Consider the following 943-residue polypeptide: Isoleucine--tRNA ligase (943 aa).

The 'HIGH' region motif lies at 59–69; that stretch reads PYANGQIHLGH. Glu577 contributes to the L-isoleucyl-5'-AMP binding site. The 'KMSKS' region signature appears at 618–622; it reads KMSKS. Lys621 serves as a coordination point for ATP. Zn(2+) is bound by residues Cys906, Cys909, Cys926, and Cys929.

It belongs to the class-I aminoacyl-tRNA synthetase family. IleS type 1 subfamily. Monomer. Zn(2+) is required as a cofactor.

Its subcellular location is the cytoplasm. The enzyme catalyses tRNA(Ile) + L-isoleucine + ATP = L-isoleucyl-tRNA(Ile) + AMP + diphosphate. Its function is as follows. Catalyzes the attachment of isoleucine to tRNA(Ile). As IleRS can inadvertently accommodate and process structurally similar amino acids such as valine, to avoid such errors it has two additional distinct tRNA(Ile)-dependent editing activities. One activity is designated as 'pretransfer' editing and involves the hydrolysis of activated Val-AMP. The other activity is designated 'posttransfer' editing and involves deacylation of mischarged Val-tRNA(Ile). The polypeptide is Isoleucine--tRNA ligase (Xylella fastidiosa (strain M12)).